The following is a 244-amino-acid chain: 1-(5-phosphoribosyl)-5-[(5-phosphoribosylamino)methylideneamino] imidazole-4-carboxamide isomerase (244 aa).

Residue Asp-8 is the Proton acceptor of the active site. The Proton donor role is filled by Asp-130.

It belongs to the HisA/HisF family.

It localises to the cytoplasm. The catalysed reaction is 1-(5-phospho-beta-D-ribosyl)-5-[(5-phospho-beta-D-ribosylamino)methylideneamino]imidazole-4-carboxamide = 5-[(5-phospho-1-deoxy-D-ribulos-1-ylimino)methylamino]-1-(5-phospho-beta-D-ribosyl)imidazole-4-carboxamide. Its pathway is amino-acid biosynthesis; L-histidine biosynthesis; L-histidine from 5-phospho-alpha-D-ribose 1-diphosphate: step 4/9. In Syntrophomonas wolfei subsp. wolfei (strain DSM 2245B / Goettingen), this protein is 1-(5-phosphoribosyl)-5-[(5-phosphoribosylamino)methylideneamino] imidazole-4-carboxamide isomerase.